Reading from the N-terminus, the 164-residue chain is SsrA-binding protein (164 aa).

The protein belongs to the SmpB family.

Its subcellular location is the cytoplasm. Its function is as follows. Required for rescue of stalled ribosomes mediated by trans-translation. Binds to transfer-messenger RNA (tmRNA), required for stable association of tmRNA with ribosomes. tmRNA and SmpB together mimic tRNA shape, replacing the anticodon stem-loop with SmpB. tmRNA is encoded by the ssrA gene; the 2 termini fold to resemble tRNA(Ala) and it encodes a 'tag peptide', a short internal open reading frame. During trans-translation Ala-aminoacylated tmRNA acts like a tRNA, entering the A-site of stalled ribosomes, displacing the stalled mRNA. The ribosome then switches to translate the ORF on the tmRNA; the nascent peptide is terminated with the 'tag peptide' encoded by the tmRNA and targeted for degradation. The ribosome is freed to recommence translation, which seems to be the essential function of trans-translation. This is SsrA-binding protein from Gluconobacter oxydans (strain 621H) (Gluconobacter suboxydans).